A 374-amino-acid chain; its full sequence is Flagellar P-ring protein (374 aa).

The first 29 residues, 1 to 29 (MPGVGISRIVRIAVAALVALAPLMTPAHA), serve as a signal peptide directing secretion.

It belongs to the FlgI family. As to quaternary structure, the basal body constitutes a major portion of the flagellar organelle and consists of four rings (L,P,S, and M) mounted on a central rod.

Its subcellular location is the periplasm. The protein resides in the bacterial flagellum basal body. Functionally, assembles around the rod to form the L-ring and probably protects the motor/basal body from shearing forces during rotation. In Nitrobacter hamburgensis (strain DSM 10229 / NCIMB 13809 / X14), this protein is Flagellar P-ring protein.